The primary structure comprises 360 residues: GDSL esterase/lipase At1g58430 (360 aa).

A signal peptide spans 1-23 (MWTSKTISFTLFITTTLLGSCNA). An N-linked (GlcNAc...) asparagine glycan is attached at Asn-22. Catalysis depends on Ser-42, which acts as the Nucleophile. 2 N-linked (GlcNAc...) asparagine glycosylation sites follow: Asn-104 and Asn-326. Catalysis depends on residues Asp-334 and His-337.

The protein belongs to the 'GDSL' lipolytic enzyme family.

It is found in the secreted. The polypeptide is GDSL esterase/lipase At1g58430 (Arabidopsis thaliana (Mouse-ear cress)).